The sequence spans 522 residues: Monogalactosyldiacylglycerol synthase, chloroplastic (522 aa).

The N-terminal 98 residues, 1–98, are a transit peptide targeting the chloroplast; sequence MSHPSTVTSE…RIPLGFSSIG (98 aa).

It belongs to the glycosyltransferase 28 family. As to quaternary structure, homodimer. Requires Zn(2+) as cofactor.

It localises to the plastid. The protein localises to the chloroplast inner membrane. It catalyses the reaction a 1,2-diacyl-sn-glycerol + UDP-alpha-D-galactose = a 1,2-diacyl-3-O-(beta-D-galactosyl)-sn-glycerol + UDP + H(+). Inhibited by ortho-phenanthroline and UDP (competitive inhibitor relatively to UDP-Gal only) and inactivated by citraconic anhydride, tert-butoxycarbonyl-L-methionine hydrosuccinimidyl ester (SLR) and N-ethylmaleimide (NEM). Its function is as follows. Involved in the synthesis of the major structural component of photosynthetic membranes. The 1,2-diacylglycerol substrate preference is 18:2/18:2 &gt; 18:0/18:1 &gt; 18:1/18:1 &gt; 18:1/16:0 &gt; 16:0/18:2 &gt; 18:3/18:3 &gt; 16:0/18:1 &gt; 16:0/16:0 &gt; 18:0/18:0. The chain is Monogalactosyldiacylglycerol synthase, chloroplastic (MGD A) from Spinacia oleracea (Spinach).